The primary structure comprises 272 residues: Elongation factor Ts (272 aa).

An involved in Mg(2+) ion dislocation from EF-Tu region spans residues Thr-86–Val-89.

Belongs to the EF-Ts family.

Its subcellular location is the cytoplasm. Associates with the EF-Tu.GDP complex and induces the exchange of GDP to GTP. It remains bound to the aminoacyl-tRNA.EF-Tu.GTP complex up to the GTP hydrolysis stage on the ribosome. In Blochmanniella pennsylvanica (strain BPEN), this protein is Elongation factor Ts.